Reading from the N-terminus, the 360-residue chain is Phosphoserine aminotransferase (360 aa).

R41 lines the L-glutamate pocket. W101, T152, D172, and Q195 together coordinate pyridoxal 5'-phosphate. Position 196 is an N6-(pyridoxal phosphate)lysine (K196). 237 to 238 (NT) serves as a coordination point for pyridoxal 5'-phosphate.

Belongs to the class-V pyridoxal-phosphate-dependent aminotransferase family. SerC subfamily. As to quaternary structure, homodimer. Requires pyridoxal 5'-phosphate as cofactor.

The protein resides in the cytoplasm. The catalysed reaction is O-phospho-L-serine + 2-oxoglutarate = 3-phosphooxypyruvate + L-glutamate. It carries out the reaction 4-(phosphooxy)-L-threonine + 2-oxoglutarate = (R)-3-hydroxy-2-oxo-4-phosphooxybutanoate + L-glutamate. The protein operates within amino-acid biosynthesis; L-serine biosynthesis; L-serine from 3-phospho-D-glycerate: step 2/3. It participates in cofactor biosynthesis; pyridoxine 5'-phosphate biosynthesis; pyridoxine 5'-phosphate from D-erythrose 4-phosphate: step 3/5. In terms of biological role, catalyzes the reversible conversion of 3-phosphohydroxypyruvate to phosphoserine and of 3-hydroxy-2-oxo-4-phosphonooxybutanoate to phosphohydroxythreonine. The chain is Phosphoserine aminotransferase from Burkholderia multivorans (strain ATCC 17616 / 249).